The chain runs to 427 residues: Probable glucuronosyltransferase Os03g0107900 (427 aa).

The Cytoplasmic portion of the chain corresponds to 1–33 (MAMRGDPKQRRASASAPHGGAAHHVADKLRRHS). The helical; Signal-anchor for type II membrane protein transmembrane segment at 34–54 (TFLLLLLLLWFALSLYLFLSA) threads the bilayer. At 55-427 (TPPPPRPAFL…QRRHVESWKR (373 aa)) the chain is on the lumenal side. N136, N168, N264, and N374 each carry an N-linked (GlcNAc...) asparagine glycan.

It belongs to the glycosyltransferase 47 family.

The protein resides in the golgi apparatus membrane. Functionally, involved in the synthesis of glucuronoxylan hemicellulose in secondary cell walls. This Oryza sativa subsp. japonica (Rice) protein is Probable glucuronosyltransferase Os03g0107900.